Here is a 335-residue protein sequence, read N- to C-terminus: DNA-directed RNA polymerase subunit alpha (335 aa).

The interval 1-233 (MTRTANEFLT…QQIAIFVDLQ (233 aa)) is alpha N-terminal domain (alpha-NTD). The segment at 247–335 (VDPILLRPVD…MDDRFAYRSR (89 aa)) is alpha C-terminal domain (alpha-CTD).

Belongs to the RNA polymerase alpha chain family. As to quaternary structure, homodimer. The RNAP catalytic core consists of 2 alpha, 1 beta, 1 beta' and 1 omega subunit. When a sigma factor is associated with the core the holoenzyme is formed, which can initiate transcription.

It catalyses the reaction RNA(n) + a ribonucleoside 5'-triphosphate = RNA(n+1) + diphosphate. Its function is as follows. DNA-dependent RNA polymerase catalyzes the transcription of DNA into RNA using the four ribonucleoside triphosphates as substrates. The polypeptide is DNA-directed RNA polymerase subunit alpha (Acinetobacter baylyi (strain ATCC 33305 / BD413 / ADP1)).